The following is a 185-amino-acid chain: MISVNDFYPGLTIELDGEIYIVLEYQHVHMAQGQATVRVKLKNLKTGNVIRKTFKSDEYVPQAFINKREAEYLYKQGDEYYFIDNESFEQYVLTEEQLGEAINYLKEGNTVSVLFYEGNPIGIELPTTVVLEVVETDPGLRGDTVSGGSKPAKLETGLVIQVPLFIQIGDKVVVDTRYAKYVERA.

The protein belongs to the elongation factor P family.

Its subcellular location is the cytoplasm. It participates in protein biosynthesis; polypeptide chain elongation. In terms of biological role, involved in peptide bond synthesis. Stimulates efficient translation and peptide-bond synthesis on native or reconstituted 70S ribosomes in vitro. Probably functions indirectly by altering the affinity of the ribosome for aminoacyl-tRNA, thus increasing their reactivity as acceptors for peptidyl transferase. The sequence is that of Elongation factor P from Dictyoglomus thermophilum (strain ATCC 35947 / DSM 3960 / H-6-12).